A 1597-amino-acid polypeptide reads, in one-letter code: MAQFQQTVNMQTLQAAAGRNSLVNDLASRRVYDNAVEELNARSRRPKVHFSKSVSTEQTLLASNAYPEFEISFTHTQQAVHSLAGGLRTLELEYLMMQVPFGSLTYDIGGNFAAHLFKGRDYVHCCMPNLDVRDIARHEGHKEAIFSYLSRLDRQRRPVPEYQRAAFHNYAENPHFVHCDRPFQQCELSTVNRWDTYAIALHSIYDIPADEFGAALLRKNVKICYAAFHFHENMLLDCDSVTLEDIGATFQRAGDKLNFFFHNESTLNYTHSFSNIIKYVCKTFFPASQRYVYHKEFLVTRVNTWYCKFTRVDTFTLFRGVYKTSVDSEEFYKAMDDAWEYKKTLAMLNSERTIFKDSAAINFWFPKVRDMVIIPLFDASITTGRMSRREVLVNKDFVYTVLNHIKTYQAKALTYANVLSFVESIRSRVIINGVTARSEWDTDKAILGPLAMTFFLVTKLSHVQDEIVLKKFQKFDATAKELIWSSLCDALKGVIPSVKETLARGGFVKLAEESLEIKIPELYCTFTDRLVLEYKRTEEFQSCDLSKPLEESEKYYNALSELSVLENLGSFDLDAFKELCQKKNVDPDVAAKVVVAIMNSELTLPFKKPTEEEVAEALSGEVVQDEGLRLSNKAPFPCVSNLKEGLVPACGLCPNGANFDRVDMDISEFHLKSVDAVKKGAMMSAVYTGKIKVQQMKNYVDYLSASLSATVSNLCKVLRDVHGVDPESQEKSGVWDVRRGRWLLKPNAKCHAWGVAEDANHKLVIVLLNWDEGKPVCDETWFRLAVSSDSLVYSDMGKLKTLTSCCRDGEPPEPTAKLVLVDGVPGCGKTKEILEKVNFSEDLVLVPGKEASKMIIRRANQAGITRADKDNVRTVDSFLMHPPKRVFKRLFIDEGLMLHTGCVNFLMLLSHCDVAYVYVDTQQIPFICRVANFPYPAHFAKLVVDEKEDRRVTLRCPADVTYFLNQKYDGSVLCTSSVERSVSAEVVRGKGALNPITLPLEGKILTFTQADKFELLDKGYKDVNTVHEVQGETYEKTAIVRLTATPLEIISRASPHVLVALTRHTTRCKYYTVVLDPMVNVISELGKLSNFLLEMYKVESGTQXQLQIDTVFKGTNLFVPTPKSGDWRDMQFYYDTLLPGNSTILNEFDAVTMNLRDISLNVKDCRIDFSKSVQVPKERPVFMKPKLRTAAEMPRTAGLLENLVAMIKRNMNAPDLTGTIDIEDTASLVVEKFWDAYVVKEFSGTDGMAMTRESFSRWLSKQESSTVGQLADFNFVDLPAVDEYKHMIKSQPKQKLDLSIQDEYPALQTIVYHSKKINAIFGPMFSELTRMLLETIDTSKFLFYTRKTPTQIEEFFSDLDSSQAMEILELDISKYDKSQNEFHCAVEYKIWEKLGIDDWLAEVWRQGHRKTTLKDYTAGIKTCLWYQRKSGDVTTFIGNTIIIAACLSSMIPMDKVIKAAFCGDDSLIYIPKGLDLPDIQAGANLTWNFEAKLFRKKYGYFCGRYVIHHDRGAIVYYDPLKLISKLGCKHIRDEVHLEELRRSLCDVTSNLNNCAYFSQLDEAVAEVHKTAVGGAFVYCSIIKYLSDKRLFKDLFFV.

In terms of domain architecture, Alphavirus-like MT spans 72–280 (SFTHTQQAVH…HSFSNIIKYV (209 aa)). The (+)RNA virus helicase ATP-binding domain occupies 791-950 (LVYSDMGKLK…KLVVDEKEDR (160 aa)). 823 to 830 (GVPGCGKT) contributes to the ATP binding site. Positions 951–1103 (RVTLRCPADV…EMYKVESGTQ (153 aa)) constitute a (+)RNA virus helicase C-terminal domain. The RdRp catalytic domain occupies 1365–1478 (MEILELDISK…YIPKGLDLPD (114 aa)).

Belongs to the tobamovirus RNA-directed RNA polymerase family. Heterodimer of a large and a small subunit.

The enzyme catalyses RNA(n) + a ribonucleoside 5'-triphosphate = RNA(n+1) + diphosphate. The catalysed reaction is ATP + H2O = ADP + phosphate + H(+). Its function is as follows. The replicase large subunit is an RNA-dependent RNA polymerase active in viral RNA replication. In terms of biological role, the replicase small subunit is a methyltransferase active in RNA capping and an RNA helicase. It also acts as a suppressor of RNA-mediated gene silencing, also known as post-transcriptional gene silencing (PTGS), a mechanism of plant viral defense that limits the accumulation of viral RNAs. May mediate silencing suppression through either inhibition of HEN1-mediated siRNA or siRNA demethylation. The protein is Replicase large subunit of Brassica napus (Rape).